The primary structure comprises 416 residues: D-amino acid dehydrogenase 2 (416 aa).

5–19 (VCIIGAGVVGLATAY) contacts FAD.

This sequence belongs to the DadA oxidoreductase family. Requires FAD as cofactor.

It carries out the reaction a D-alpha-amino acid + A + H2O = a 2-oxocarboxylate + AH2 + NH4(+). In terms of biological role, oxidative deamination of D-amino acids. In Pseudomonas aeruginosa (strain ATCC 15692 / DSM 22644 / CIP 104116 / JCM 14847 / LMG 12228 / 1C / PRS 101 / PAO1), this protein is D-amino acid dehydrogenase 2 (dadA2).